Consider the following 224-residue polypeptide: Transcriptional regulatory protein DltR (224 aa).

Residues 2–116 form the Response regulatory domain; the sequence is RLLVVEDEKS…ELLARIRLRT (115 aa). Asp-51 bears the 4-aspartylphosphate mark. The segment at residues 124–222 is a DNA-binding region (ompR/PhoB-type); sequence ANQLRLGNIR…TKGFGYSLEE (99 aa).

Phosphorylated by DltS.

The protein resides in the cytoplasm. Its function is as follows. Member of the two-component regulatory system DltS/DltR. Regulates the expression of the dlt operon. This Streptococcus agalactiae serotype III (strain NEM316) protein is Transcriptional regulatory protein DltR (dltR).